Consider the following 289-residue polypeptide: Digeranylgeranylglyceryl phosphate synthase (289 aa).

The next 8 membrane-spanning stretches (helical) occupy residues 17-37 (CLMA…ILTS), 50-70 (LFSS…GNAI), 106-126 (FALG…IALF), 141-161 (TPLL…LFGA), 163-183 (VFGL…ALAI), 221-241 (LIGF…MLGL), 243-263 (YLYL…QLLA), and 269-289 (KSSK…IAGV).

Belongs to the UbiA prenyltransferase family. DGGGP synthase subfamily. The cofactor is Mg(2+).

It is found in the cell membrane. The catalysed reaction is sn-3-O-(geranylgeranyl)glycerol 1-phosphate + (2E,6E,10E)-geranylgeranyl diphosphate = 2,3-bis-O-(geranylgeranyl)-sn-glycerol 1-phosphate + diphosphate. Its pathway is membrane lipid metabolism; glycerophospholipid metabolism. Its function is as follows. Prenyltransferase that catalyzes the transfer of the geranylgeranyl moiety of geranylgeranyl diphosphate (GGPP) to the C2 hydroxyl of (S)-3-O-geranylgeranylglyceryl phosphate (GGGP). This reaction is the second ether-bond-formation step in the biosynthesis of archaeal membrane lipids. The sequence is that of Digeranylgeranylglyceryl phosphate synthase from Methanosarcina barkeri (strain Fusaro / DSM 804).